A 1316-amino-acid polypeptide reads, in one-letter code: DNA-directed RNA polymerase subunit beta' (1316 aa).

Zn(2+) contacts are provided by C60, C62, C75, and C78. Mg(2+) contacts are provided by D535, D537, and D539. C891, C968, C975, and C978 together coordinate Zn(2+).

The protein belongs to the RNA polymerase beta' chain family. As to quaternary structure, the RNAP catalytic core consists of 2 alpha, 1 beta, 1 beta' and 1 omega subunit. When a sigma factor is associated with the core the holoenzyme is formed, which can initiate transcription. Requires Mg(2+) as cofactor. It depends on Zn(2+) as a cofactor.

It carries out the reaction RNA(n) + a ribonucleoside 5'-triphosphate = RNA(n+1) + diphosphate. Functionally, DNA-dependent RNA polymerase catalyzes the transcription of DNA into RNA using the four ribonucleoside triphosphates as substrates. The polypeptide is DNA-directed RNA polymerase subunit beta' (Mycobacterium leprae (strain Br4923)).